The chain runs to 788 residues: MLNSVKKLLGDSQKRKLKKYEQLVQEINNLEEKLSDLSDEELRHKTITFKDMLRDGKTVDDIKVEAFAVVREAAKRVLGLRHYDVQLIGGLVLLEGNIAEMPTGEGKTLVSSLPTYVRALEGKGVHVITVNDYLAKRDKELIGQVHEFLGLKVGLNIPQIDPFEKKLAYEADITYGIGTEFGFDYLRDNMAASKNEQVQRPYHFAIIDEIDSVLIDEAKTPLIIAGKKSSSSDLHYLCAKVIKSFQDTLHYTYDAESKSASFTEDGIIKIEDLFDIDNLYDLEHQTLYHYMIQALRAHVAFQCDVDYIVHDEKILLVDIFTGRVMDGRSLSDGLHQALEAKEGLEITEENQTQASITIQNFFRMYPALSGMTGTAKTEEKEFNRVYNMEVIPIPTNRPIIREDKKDVVYVTADAKYKAVREDVLKHNKQGRPILIGTMSILQSETVARYLDEANITYQLLNAKSAEQEADLIATAGQKGQITIATNMAGRGTDILLGEGVHELGGLHVIGTERHESRRVDNQLKGRAGRQGDPGSSQFFLSLEDEMLKRFAQEEVEKLTKSLKTDETGLILTAKVHDFVNRTQLICEGSHFSMREYNLKLDDVINDQRNVIYKLRNNLLQEDTNMIEIIIPMIDHAVEAISKQYLVEGMLPEEWDFASLTASLNEILSVENMPSLSANNVHSPEDLQSVLKETLSLYKERVNELDSHTDLQQSLRYVALHFLDQNWVNHLDAMTHLKEGIGLRQYQQEDPTRLYQKEALDIFLYTYGNFEKEMCRYVARHLGVPENVQ.

ATP contacts are provided by residues Q86, 104–108, and D493; that span reads GEGKT.

Belongs to the SecA family. As to quaternary structure, monomer and homodimer. Part of the essential Sec protein translocation apparatus which comprises SecA, SecYEG and auxiliary proteins SecDF. Other proteins may also be involved.

The protein resides in the cell membrane. It localises to the cytoplasm. The enzyme catalyses ATP + H2O + cellular proteinSide 1 = ADP + phosphate + cellular proteinSide 2.. Part of the Sec protein translocase complex. Interacts with the SecYEG preprotein conducting channel. Has a central role in coupling the hydrolysis of ATP to the transfer of proteins into and across the cell membrane, serving as an ATP-driven molecular motor driving the stepwise translocation of polypeptide chains across the membrane. The polypeptide is Protein translocase subunit SecA 2 (Bacillus thuringiensis (strain Al Hakam)).